The sequence spans 186 residues: Peptidyl-tRNA hydrolase (186 aa).

Tyr-14 contacts tRNA. His-19 (proton acceptor) is an active-site residue. The tRNA site is built by Phe-64, Asn-66, and Asn-112.

It belongs to the PTH family. As to quaternary structure, monomer.

The protein resides in the cytoplasm. The enzyme catalyses an N-acyl-L-alpha-aminoacyl-tRNA + H2O = an N-acyl-L-amino acid + a tRNA + H(+). In terms of biological role, hydrolyzes ribosome-free peptidyl-tRNAs (with 1 or more amino acids incorporated), which drop off the ribosome during protein synthesis, or as a result of ribosome stalling. Catalyzes the release of premature peptidyl moieties from peptidyl-tRNA molecules trapped in stalled 50S ribosomal subunits, and thus maintains levels of free tRNAs and 50S ribosomes. This is Peptidyl-tRNA hydrolase from Listeria monocytogenes serotype 4a (strain HCC23).